A 320-amino-acid chain; its full sequence is HPr kinase/phosphorylase (320 aa).

Residues H141 and K162 contribute to the active site. ATP is bound at residue 156–163 (GHSGLGKS). Residue S163 coordinates Mg(2+). D180 acts as the Proton acceptor; for phosphorylation activity. Proton donor; for dephosphorylation activity in catalysis. The important for the catalytic mechanism of both phosphorylation and dephosphorylation stretch occupies residues 204–213 (LEVRGLGILN). A Mg(2+)-binding site is contributed by E205. R248 is a catalytic residue. The segment at 269 to 274 (PVAVGR) is important for the catalytic mechanism of dephosphorylation.

The protein belongs to the HPrK/P family. As to quaternary structure, homohexamer. Mg(2+) serves as cofactor.

It catalyses the reaction [HPr protein]-L-serine + ATP = [HPr protein]-O-phospho-L-serine + ADP + H(+). It carries out the reaction [HPr protein]-O-phospho-L-serine + phosphate + H(+) = [HPr protein]-L-serine + diphosphate. Catalyzes the ATP- as well as the pyrophosphate-dependent phosphorylation of a specific serine residue in HPr, a phosphocarrier protein of the phosphoenolpyruvate-dependent sugar phosphotransferase system (PTS). HprK/P also catalyzes the pyrophosphate-producing, inorganic phosphate-dependent dephosphorylation (phosphorolysis) of seryl-phosphorylated HPr (P-Ser-HPr). The sequence is that of HPr kinase/phosphorylase from Neisseria meningitidis serogroup A / serotype 4A (strain DSM 15465 / Z2491).